A 438-amino-acid polypeptide reads, in one-letter code: Malic acid transport protein (438 aa).

A run of 10 helical transmembrane segments spans residues 37 to 57, 65 to 85, 106 to 126, 140 to 160, 172 to 192, 205 to 225, 242 to 262, 288 to 308, 321 to 341, and 353 to 373; these read SWFA…SFPF, IGKI…SCML, LFIA…AIYA, ILYY…FFTI, SPAW…AGAV, VIFG…LFAV, PGMF…INIA, FMAI…MVSF, ACGW…TIEI, and FGHI…YLMV. The disordered stretch occupies residues 390–438; sequence AHPPPKPNTGVLNPTFPPEKAPASLEKVDTHVTSTGGESDPPSSEHESV. Ser-413, Ser-423, Ser-428, Ser-432, Ser-433, and Ser-437 each carry phosphoserine.

The protein belongs to the tellurite-resistance/dicarboxylate transporter (TDT) family.

Its subcellular location is the membrane. Its function is as follows. Permease for malate and other C4 dicarboxylic acids. This chain is Malic acid transport protein (mae1), found in Schizosaccharomyces pombe (strain 972 / ATCC 24843) (Fission yeast).